Here is a 105-residue protein sequence, read N- to C-terminus: Large ribosomal subunit protein uL24 (105 aa).

The segment covering 77 to 93 (DGKPTRVGYRKDDETGK) has biased composition (basic and acidic residues). The segment at 77-105 (DGKPTRVGYRKDDETGKNVRIAKSNGKDL) is disordered.

Belongs to the universal ribosomal protein uL24 family. In terms of assembly, part of the 50S ribosomal subunit.

Functionally, one of two assembly initiator proteins, it binds directly to the 5'-end of the 23S rRNA, where it nucleates assembly of the 50S subunit. One of the proteins that surrounds the polypeptide exit tunnel on the outside of the subunit. The chain is Large ribosomal subunit protein uL24 from Mycolicibacterium gilvum (strain PYR-GCK) (Mycobacterium gilvum (strain PYR-GCK)).